The sequence spans 101 residues: Urease subunit beta (101 aa).

This sequence belongs to the urease beta subunit family. Heterotrimer of UreA (gamma), UreB (beta) and UreC (alpha) subunits. Three heterotrimers associate to form the active enzyme.

The protein resides in the cytoplasm. The catalysed reaction is urea + 2 H2O + H(+) = hydrogencarbonate + 2 NH4(+). It functions in the pathway nitrogen metabolism; urea degradation; CO(2) and NH(3) from urea (urease route): step 1/1. This is Urease subunit beta from Chelativorans sp. (strain BNC1).